Here is a 647-residue protein sequence, read N- to C-terminus: Acetyl-coenzyme A synthetase (647 aa).

CoA contacts are provided by residues 190–193 and threonine 310; that span reads RGGR. ATP-binding positions include 386–388, 410–415, aspartate 499, and arginine 514; these read GEP and DTWWQT. Position 522 (serine 522) interacts with CoA. Arginine 525 is an ATP binding site. Mg(2+)-binding residues include valine 536, histidine 538, and valine 541. Arginine 583 lines the CoA pocket. Lysine 608 is modified (N6-acetyllysine).

The protein belongs to the ATP-dependent AMP-binding enzyme family. It depends on Mg(2+) as a cofactor. In terms of processing, acetylated. Deacetylation by the SIR2-homolog deacetylase activates the enzyme.

The catalysed reaction is acetate + ATP + CoA = acetyl-CoA + AMP + diphosphate. Functionally, catalyzes the conversion of acetate into acetyl-CoA (AcCoA), an essential intermediate at the junction of anabolic and catabolic pathways. AcsA undergoes a two-step reaction. In the first half reaction, AcsA combines acetate with ATP to form acetyl-adenylate (AcAMP) intermediate. In the second half reaction, it can then transfer the acetyl group from AcAMP to the sulfhydryl group of CoA, forming the product AcCoA. The protein is Acetyl-coenzyme A synthetase of Xylella fastidiosa (strain Temecula1 / ATCC 700964).